The primary structure comprises 205 residues: tRNA (guanine-N(7)-)-methyltransferase (205 aa).

S-adenosyl-L-methionine contacts are provided by Glu-36, Glu-61, Asp-88, and Asp-109. Asp-109 is a catalytic residue. A substrate-binding site is contributed by Lys-113. The interaction with RNA stretch occupies residues 115-120 (RHEKRR). Residues Asp-145 and 183 to 186 (TGYE) each bind substrate.

Belongs to the class I-like SAM-binding methyltransferase superfamily. TrmB family.

The enzyme catalyses guanosine(46) in tRNA + S-adenosyl-L-methionine = N(7)-methylguanosine(46) in tRNA + S-adenosyl-L-homocysteine. Its pathway is tRNA modification; N(7)-methylguanine-tRNA biosynthesis. Its function is as follows. Catalyzes the formation of N(7)-methylguanine at position 46 (m7G46) in tRNA. The protein is tRNA (guanine-N(7)-)-methyltransferase of Mycoplasmopsis agalactiae (strain NCTC 10123 / CIP 59.7 / PG2) (Mycoplasma agalactiae).